Here is a 378-residue protein sequence, read N- to C-terminus: Succinyl-diaminopimelate desuccinylase (378 aa).

His-77 provides a ligand contact to Zn(2+). Residue Asp-79 is part of the active site. Asp-108 provides a ligand contact to Zn(2+). The active-site Proton acceptor is the Glu-138. Residues Glu-139, Glu-167, and His-350 each contribute to the Zn(2+) site.

Belongs to the peptidase M20A family. DapE subfamily. As to quaternary structure, homodimer. It depends on Zn(2+) as a cofactor. Requires Co(2+) as cofactor.

It catalyses the reaction N-succinyl-(2S,6S)-2,6-diaminopimelate + H2O = (2S,6S)-2,6-diaminopimelate + succinate. The protein operates within amino-acid biosynthesis; L-lysine biosynthesis via DAP pathway; LL-2,6-diaminopimelate from (S)-tetrahydrodipicolinate (succinylase route): step 3/3. Catalyzes the hydrolysis of N-succinyl-L,L-diaminopimelic acid (SDAP), forming succinate and LL-2,6-diaminopimelate (DAP), an intermediate involved in the bacterial biosynthesis of lysine and meso-diaminopimelic acid, an essential component of bacterial cell walls. This is Succinyl-diaminopimelate desuccinylase from Erythrobacter litoralis (strain HTCC2594).